A 248-amino-acid chain; its full sequence is tRNA (guanine-N(1)-)-methyltransferase (248 aa).

S-adenosyl-L-methionine-binding positions include Gly113 and 133–138 (IGDYVL).

This sequence belongs to the RNA methyltransferase TrmD family. As to quaternary structure, homodimer.

Its subcellular location is the cytoplasm. The catalysed reaction is guanosine(37) in tRNA + S-adenosyl-L-methionine = N(1)-methylguanosine(37) in tRNA + S-adenosyl-L-homocysteine + H(+). Its function is as follows. Specifically methylates guanosine-37 in various tRNAs. This chain is tRNA (guanine-N(1)-)-methyltransferase, found in Shewanella halifaxensis (strain HAW-EB4).